Here is a 363-residue protein sequence, read N- to C-terminus: Flagellar P-ring protein (363 aa).

Residues 1 to 21 form the signal peptide; sequence MKTVINIFILFTFLASLSANA.

The protein belongs to the FlgI family. In terms of assembly, the basal body constitutes a major portion of the flagellar organelle and consists of four rings (L,P,S, and M) mounted on a central rod.

The protein localises to the periplasm. It is found in the bacterial flagellum basal body. Its function is as follows. Assembles around the rod to form the L-ring and probably protects the motor/basal body from shearing forces during rotation. The protein is Flagellar P-ring protein of Colwellia psychrerythraea (strain 34H / ATCC BAA-681) (Vibrio psychroerythus).